The following is a 188-amino-acid chain: Mitochondrial import receptor subunit TOM20 homolog (188 aa).

The Mitochondrial intermembrane segment spans residues 1–12; the sequence is MTDTLFGFNKSN. The chain crosses the membrane as a helical span at residues 13–31; it reads VVLAAGVAGAAFLGYCIYF. Over 32–188 the chain is Cytoplasmic; sequence DHKRINAPDY…ELIDDTDDLE (157 aa). Disordered stretches follow at residues 48–67 and 155–188; these read KRRAQAGSGGMAARRPPAGG and ADEAENEPPLVQYLGDGPPPAQIQELIDDTDDLE. Low complexity predominate over residues 58-67; that stretch reads MAARRPPAGG.

The protein belongs to the Tom20 family. In terms of assembly, forms part of the preprotein translocase complex of the outer mitochondrial membrane (TOM complex).

The protein resides in the mitochondrion outer membrane. Its function is as follows. Central component of the receptor complex responsible for the recognition and translocation of cytosolically synthesized mitochondrial preproteins. Together with TOM22 functions as the transit peptide receptor at the surface of the mitochondrion outer membrane and facilitates the movement of preproteins into the translocation pore. The protein is Mitochondrial import receptor subunit TOM20 homolog (tomm-20) of Caenorhabditis briggsae.